Consider the following 229-residue polypeptide: MSPNLSRLERKLGHSFKDQDLMILALTHRSFAGRNNERLEFLGDAILNFVAGEALFERFPQAREGQLSRLRARLVKGETLAVLARGFELGEYLRLGSGELKSGGFRRESILADALEALIGAIYLDAGMDAARERVLDWLSGELDGLTLIDTNKDPKTRLQEFLQSRACELPRYEVVDIQGEPHCRTFMVECQVALLNEKTLGQGGSRRIAEQVAAAAALIALGVENGND.

The region spanning 5-127 (LSRLERKLGH…LIGAIYLDAG (123 aa)) is the RNase III domain. Residue E40 participates in Mg(2+) binding. Residue D44 is part of the active site. 2 residues coordinate Mg(2+): D113 and E116. The active site involves E116. Positions 154 to 224 (DPKTRLQEFL…AAAALIALGV (71 aa)) constitute a DRBM domain.

The protein belongs to the ribonuclease III family. As to quaternary structure, homodimer. Mg(2+) serves as cofactor.

It localises to the cytoplasm. The enzyme catalyses Endonucleolytic cleavage to 5'-phosphomonoester.. Its function is as follows. Digests double-stranded RNA. Involved in the processing of primary rRNA transcript to yield the immediate precursors to the large and small rRNAs (23S and 16S). Processes some mRNAs, and tRNAs when they are encoded in the rRNA operon. Processes pre-crRNA and tracrRNA of type II CRISPR loci if present in the organism. The polypeptide is Ribonuclease 3 (Ectopseudomonas mendocina (strain ymp) (Pseudomonas mendocina)).